The following is a 256-amino-acid chain: Ras-related protein RabJ (256 aa).

Residue 16-23 coordinates GTP; the sequence is GSSDVGKT. An Effector region motif is present at residues 38 to 46; the sequence is LTSTIGASF. GTP contacts are provided by residues 64 to 68 and 122 to 125; these read DSAGQ and NKID. The disordered stretch occupies residues 229–256; that stretch reads NGHLQGSINGHNNQNSTNYSDNSDQCCG. Residues 230–256 are compositionally biased toward polar residues; it reads GHLQGSINGHNNQNSTNYSDNSDQCCG. S-geranylgeranyl cysteine attachment occurs at residues Cys-254 and Cys-255.

The protein belongs to the small GTPase superfamily. Rab family.

The protein localises to the cell membrane. In Dictyostelium discoideum (Social amoeba), this protein is Ras-related protein RabJ (rabJ).